An 861-amino-acid polypeptide reads, in one-letter code: Valine--tRNA ligase (861 aa).

Residues 42-52 carry the 'HIGH' region motif; sequence PNITGRIHMGH. The short motif at 521-525 is the 'KMSKS' region element; the sequence is KMSKS. Lys524 serves as a coordination point for ATP. Positions 792–861 form a coiled coil; the sequence is VAGLNLQSEI…ILNQILGDLM (70 aa).

This sequence belongs to the class-I aminoacyl-tRNA synthetase family. ValS type 1 subfamily. Monomer.

Its subcellular location is the cytoplasm. It catalyses the reaction tRNA(Val) + L-valine + ATP = L-valyl-tRNA(Val) + AMP + diphosphate. Functionally, catalyzes the attachment of valine to tRNA(Val). As ValRS can inadvertently accommodate and process structurally similar amino acids such as threonine, to avoid such errors, it has a 'posttransfer' editing activity that hydrolyzes mischarged Thr-tRNA(Val) in a tRNA-dependent manner. This chain is Valine--tRNA ligase, found in Pseudothermotoga lettingae (strain ATCC BAA-301 / DSM 14385 / NBRC 107922 / TMO) (Thermotoga lettingae).